The following is a 161-amino-acid chain: 2-C-methyl-D-erythritol 2,4-cyclodiphosphate synthase (161 aa).

Positions 10 and 12 each coordinate a divalent metal cation. 4-CDP-2-C-methyl-D-erythritol 2-phosphate is bound by residues 10 to 12 (DVH) and 36 to 37 (HS). His44 is an a divalent metal cation binding site. 4-CDP-2-C-methyl-D-erythritol 2-phosphate contacts are provided by residues 58–60 (DIG), 63–67 (FSDTD), and Arg144.

This sequence belongs to the IspF family. As to quaternary structure, homotrimer. The cofactor is a divalent metal cation.

It catalyses the reaction 4-CDP-2-C-methyl-D-erythritol 2-phosphate = 2-C-methyl-D-erythritol 2,4-cyclic diphosphate + CMP. The protein operates within isoprenoid biosynthesis; isopentenyl diphosphate biosynthesis via DXP pathway; isopentenyl diphosphate from 1-deoxy-D-xylulose 5-phosphate: step 4/6. In terms of biological role, involved in the biosynthesis of isopentenyl diphosphate (IPP) and dimethylallyl diphosphate (DMAPP), two major building blocks of isoprenoid compounds. Catalyzes the conversion of 4-diphosphocytidyl-2-C-methyl-D-erythritol 2-phosphate (CDP-ME2P) to 2-C-methyl-D-erythritol 2,4-cyclodiphosphate (ME-CPP) with a corresponding release of cytidine 5-monophosphate (CMP). This chain is 2-C-methyl-D-erythritol 2,4-cyclodiphosphate synthase, found in Burkholderia lata (strain ATCC 17760 / DSM 23089 / LMG 22485 / NCIMB 9086 / R18194 / 383).